Reading from the N-terminus, the 310-residue chain is UDP-N-acetylenolpyruvoylglucosamine reductase (310 aa).

An FAD-binding PCMH-type domain is found at 34–213 (RAGGNAEVLF…LRRMNEITSS (180 aa)). R178 is an active-site residue. The active-site Proton donor is the S227. E297 is an active-site residue.

Belongs to the MurB family. FAD serves as cofactor.

The protein resides in the cytoplasm. The enzyme catalyses UDP-N-acetyl-alpha-D-muramate + NADP(+) = UDP-N-acetyl-3-O-(1-carboxyvinyl)-alpha-D-glucosamine + NADPH + H(+). Its pathway is cell wall biogenesis; peptidoglycan biosynthesis. Cell wall formation. The protein is UDP-N-acetylenolpyruvoylglucosamine reductase of Parvibaculum lavamentivorans (strain DS-1 / DSM 13023 / NCIMB 13966).